A 25-amino-acid polypeptide reads, in one-letter code: Small ribosomal subunit protein eS32 (25 aa).

The tract at residues 1–25 (MREKWKKKRSRRLRRKRRKMRARSK) is disordered.

This sequence belongs to the eukaryotic ribosomal protein eS32 family. As to quaternary structure, component of the large ribosomal subunit.

This Agaricus bisporus (White button mushroom) protein is Small ribosomal subunit protein eS32 (rpl41).